The chain runs to 160 residues: Large ribosomal subunit protein uL22c (160 aa).

This sequence belongs to the universal ribosomal protein uL22 family. In terms of assembly, part of the 50S ribosomal subunit.

The protein localises to the plastid. It is found in the chloroplast. This protein binds specifically to 23S rRNA. Functionally, the globular domain of the protein is located near the polypeptide exit tunnel on the outside of the subunit, while an extended beta-hairpin is found that lines the wall of the exit tunnel in the center of the 70S ribosome. This chain is Large ribosomal subunit protein uL22c (rpl22), found in Draba nemorosa (Woodland whitlowgrass).